A 162-amino-acid chain; its full sequence is Allophycocyanin subunit beta (162 aa).

Asparagine 72 bears the N4-methylasparagine mark. Cysteine 82 is a binding site for (2R,3E)-phycocyanobilin.

Belongs to the phycobiliprotein family. Heterohexamer of two alpha chains, one alpha-B chain and three beta chains. Contains one covalently linked phycocyanobilin chromophore. The chromophore is added by phycocyanobilin lyase CpcS 1.

Its subcellular location is the cellular thylakoid membrane. Light-harvesting photosynthetic bile pigment-protein from the phycobiliprotein complex. Allophycocyanin has a maximum absorption at approximately 650 to 653 nanometers. The chain is Allophycocyanin subunit beta (apcB) from Nostoc sp. (strain PCC 7120 / SAG 25.82 / UTEX 2576).